The primary structure comprises 133 residues: Lanmodulin (133 aa).

Residues 1 to 21 (MAFRLSSAVLLAALVAAPAYA) form the signal peptide. Residues D35, D37, D39, T41, E46, D59, D61, D63, T65, E70, D84, D86, D88, T90, E95, N108, D110, D112, T114, and E119 each contribute to the Nd(3+) site. 4 consecutive EF-hand domains span residues 35–46 (DPDKDGTIDLKE), 59–70 (DPDKDGTLDAKE), 84–95 (DPDNDGTLDKKE), and 108–119 (NPDNDGTIDARE).

Monomer.

It is found in the periplasm. High-affinity lanthanide (Ln)-binding protein. Shows 100 million-fold selectivity for La(3+) over Ca(2+). Binds 3 equiv of Ln(3+) with picomolar affinity and a fourth with approximately micromolar affinity. May be involved in receiving and then transporting lanthanides (such as La(3+), Nd(3+) and Sm(3+)) to a specific periplasmic destination. In Methylorubrum extorquens (strain ATCC 14718 / DSM 1338 / JCM 2805 / NCIMB 9133 / AM1) (Methylobacterium extorquens), this protein is Lanmodulin.